Here is a 143-residue protein sequence, read N- to C-terminus: ATP synthase epsilon chain (143 aa).

The protein belongs to the ATPase epsilon chain family. In terms of assembly, F-type ATPases have 2 components, CF(1) - the catalytic core - and CF(0) - the membrane proton channel. CF(1) has five subunits: alpha(3), beta(3), gamma(1), delta(1), epsilon(1). CF(0) has three main subunits: a, b and c.

The protein resides in the cell membrane. Produces ATP from ADP in the presence of a proton gradient across the membrane. The polypeptide is ATP synthase epsilon chain (Lacticaseibacillus casei (strain BL23) (Lactobacillus casei)).